We begin with the raw amino-acid sequence, 572 residues long: Probable lysosomal cobalamin transporter (572 aa).

A run of 9 helical transmembrane segments spans residues valine 8–isoleucine 28, phenylalanine 40–proline 60, isoleucine 95–alanine 115, threonine 145–methionine 165, alanine 188–threonine 208, glycine 314–valine 334, isoleucine 374–valine 394, alanine 421–glycine 441, and valine 499–alanine 519. Residues glycine 522–arginine 544 form a disordered region.

The protein belongs to the LIMR family. LMBRD1 subfamily.

The protein localises to the lysosome membrane. Functionally, probable lysosomal cobalamin transporter. Required to export cobalamin from lysosomes allowing its conversion to cofactors. The protein is Probable lysosomal cobalamin transporter of Aspergillus fumigatus (strain ATCC MYA-4609 / CBS 101355 / FGSC A1100 / Af293) (Neosartorya fumigata).